The sequence spans 168 residues: MINDILEPGLRVVFCGINPGKSSAHTGFHFAHPGNRFWKVIHLAGFTDRQLKPEEERHLLDTRCGITKLVERPTVQANEVDVKELHEGGRNLIKKIEDFQPDALAVLGKKAYEQAFSQRGVKWGKQKLKIGKTEIWVLPNPSGLNRASLDKLVEAYRELDDALVARGR.

It belongs to the uracil-DNA glycosylase (UDG) superfamily. TDG/mug family. Binds DNA as a monomer.

Its subcellular location is the cytoplasm. The enzyme catalyses Specifically hydrolyzes mismatched double-stranded DNA and polynucleotides, releasing free uracil.. Functionally, excises ethenocytosine and uracil, which can arise by alkylation or deamination of cytosine, respectively, from the corresponding mispairs with guanine in ds-DNA. It is capable of hydrolyzing the carbon-nitrogen bond between the sugar-phosphate backbone of the DNA and the mispaired base. The complementary strand guanine functions in substrate recognition. Required for DNA damage lesion repair in stationary-phase cells. The sequence is that of G/U mismatch-specific DNA glycosylase from Cronobacter sakazakii (strain ATCC BAA-894) (Enterobacter sakazakii).